The primary structure comprises 246 residues: Sortase B (246 aa).

Residues 5-24 form a helical membrane-spanning segment; it reads SFLGKSLTLVVLGVFLFSGW.

It belongs to the bacterial sortase family. Class B subfamily.

It is found in the cell membrane. In terms of biological role, transpeptidase that anchors surface proteins to the cell wall. Recognizes and modifies its substrate by proteolytic cleavage of a C-terminal sorting signal. Following cleavage, a covalent intermediate is formed via a thioester bond between the sortase and its substrate, which is then transferred and covalently attached to the cell wall. Catalyzes a cell wall sorting reaction in which a surface protein with the consensus sorting signal NP(Q/K)(T/S)(N/G/S)(D/A) is cleaved between the fourth and fifth residues, and the fourth position is linked to the cell wall. This is not the major sortase in Listeria, it seems to anchor only 2 proteins, Hbp2 (SvpA) and Hbp1. In Listeria monocytogenes serovar 1/2a (strain ATCC BAA-679 / EGD-e), this protein is Sortase B.